Here is a 391-residue protein sequence, read N- to C-terminus: MKSTRKVVGIFLATCLLPFTVLQNVAAQGSCRNPNQKQGQCLSIYDCQSLLSVIQQSYVSPEDRTFLRNSQCLDGVGRQPYVCCTSDRSFGSQEATSAAPPPTTTSSSSRGQDGQAGLGNLLPSPPKCGPHSFSNKVYNGNDTAIDEFNWMALLEYVDNRGRRELSCGGSLINNRYVLTAAHCVIGAVETEVGHLTTVRLGEYDTSKDVDCIDDICNQPILQLGIEQATVHPQYDPANKNRIHDIALLRLDRPVVLNEYIQPVCLPLVSTRMAINTGELLVVSGWGRTTTARKSTIKQRLDLPVNDHDYCARKFATRNIHLISSQLCVGGEFYRDSCDGDSGGPLMRRGFDQAWYQEGVVSFGNRCGLEGWPGVYTRVADYMDWIVETIRP.

Residues 1–27 (MKSTRKVVGIFLATCLLPFTVLQNVAA) form the signal peptide. Positions 28-136 (QGSCRNPNQK…KCGPHSFSNK (109 aa)) are cleaved as a propeptide — activation peptide. One can recognise a Clip domain in the interval 30–84 (SCRNPNQKQGQCLSIYDCQSLLSVIQQSYVSPEDRTFLRNSQCLDGVGRQPYVCC). Cystine bridges form between C31–C83, C41–C72, and C47–C84. Positions 91 to 121 (GSQEATSAAPPPTTTSSSSRGQDGQAGLGNL) are disordered. Cystine bridges form between C128/C264, C167/C183, C211/C216, C310/C327, and C337/C366. Positions 137 to 390 (VYNGNDTAID…YMDWIVETIR (254 aa)) constitute a Peptidase S1 domain. Residue N141 is glycosylated (N-linked (GlcNAc...) asparagine). H182 serves as the catalytic Charge relay system. Residues E202, D204, K207, and D210 each contribute to the Ca(2+) site. D244 functions as the Charge relay system in the catalytic mechanism. Residue S341 is the Charge relay system of the active site.

It belongs to the peptidase S1 family. CLIP subfamily. In terms of assembly, interacts with Spn27A.

It localises to the secreted. Its function is as follows. Serine protease that, by cleaving and activating prophenoloxidase (PPO1) after immune challenge, plays an essential role in the melanization immune response to septic wounding. May function in diverse Hayan-dependent PPO1-activating cascades that are negatively controlled by different serpin proteins; Spn27A in the hemolymph and Spn77BA in the trachea. Important for the innate immune response to fungi. Regulation of melanization and PPO1 activation appears to be largely independent of the Toll signaling pathway. The sequence is that of Serine protease 7 from Drosophila melanogaster (Fruit fly).